Consider the following 379-residue polypeptide: Alcohol dehydrogenase 2 (379 aa).

Positions 47, 49, 69, 99, 102, 105, 113, and 177 each coordinate Zn(2+). An alcohol is bound by residues Thr49 and His69. NAD(+) is bound at residue Thr49. Residues 202–207 (GLGAVG), Asp226, Lys231, Thr272, Val295, 295–297 (VGV), Phe322, and Arg372 contribute to the NAD(+) site.

This sequence belongs to the zinc-containing alcohol dehydrogenase family. In terms of assembly, homodimer. Zn(2+) serves as cofactor.

Its subcellular location is the cytoplasm. The enzyme catalyses a primary alcohol + NAD(+) = an aldehyde + NADH + H(+). It carries out the reaction a secondary alcohol + NAD(+) = a ketone + NADH + H(+). This chain is Alcohol dehydrogenase 2 (ADH2), found in Oryza sativa subsp. indica (Rice).